A 392-amino-acid chain; its full sequence is NADH-quinone oxidoreductase subunit D (392 aa).

The protein belongs to the complex I 49 kDa subunit family. NDH-1 is composed of 14 different subunits. Subunits NuoB, C, D, E, F, and G constitute the peripheral sector of the complex.

The protein localises to the cell inner membrane. It catalyses the reaction a quinone + NADH + 5 H(+)(in) = a quinol + NAD(+) + 4 H(+)(out). Functionally, NDH-1 shuttles electrons from NADH, via FMN and iron-sulfur (Fe-S) centers, to quinones in the respiratory chain. The immediate electron acceptor for the enzyme in this species is believed to be ubiquinone. Couples the redox reaction to proton translocation (for every two electrons transferred, four hydrogen ions are translocated across the cytoplasmic membrane), and thus conserves the redox energy in a proton gradient. The polypeptide is NADH-quinone oxidoreductase subunit D (Rhodospirillum rubrum (strain ATCC 11170 / ATH 1.1.1 / DSM 467 / LMG 4362 / NCIMB 8255 / S1)).